We begin with the raw amino-acid sequence, 129 residues long: Cytochrome c oxidase subunit 5B, mitochondrial (129 aa).

The transit peptide at 1–31 directs the protein to the mitochondrion; the sequence is MASRLLRGAGALAAQTLRARGPNGVAVVRSM. An N6-acetyllysine mark is found at Lys68 and Lys86. Residues Cys91, Cys93, Cys113, and Cys116 each contribute to the Zn(2+) site. The residue at position 121 (Lys121) is an N6-acetyllysine.

It belongs to the cytochrome c oxidase subunit 5B family. In terms of assembly, component of the cytochrome c oxidase (complex IV, CIV), a multisubunit enzyme composed of 14 subunits. The complex is composed of a catalytic core of 3 subunits MT-CO1, MT-CO2 and MT-CO3, encoded in the mitochondrial DNA, and 11 supernumerary subunits COX4I, COX5A, COX5B, COX6A, COX6B, COX6C, COX7A, COX7B, COX7C, COX8 and NDUFA4, which are encoded in the nuclear genome. The complex exists as a monomer or a dimer and forms supercomplexes (SCs) in the inner mitochondrial membrane with NADH-ubiquinone oxidoreductase (complex I, CI) and ubiquinol-cytochrome c oxidoreductase (cytochrome b-c1 complex, complex III, CIII), resulting in different assemblies (supercomplex SCI(1)III(2)IV(1) and megacomplex MCI(2)III(2)IV(2)).

The protein resides in the mitochondrion inner membrane. It participates in energy metabolism; oxidative phosphorylation. Functionally, component of the cytochrome c oxidase, the last enzyme in the mitochondrial electron transport chain which drives oxidative phosphorylation. The respiratory chain contains 3 multisubunit complexes succinate dehydrogenase (complex II, CII), ubiquinol-cytochrome c oxidoreductase (cytochrome b-c1 complex, complex III, CIII) and cytochrome c oxidase (complex IV, CIV), that cooperate to transfer electrons derived from NADH and succinate to molecular oxygen, creating an electrochemical gradient over the inner membrane that drives transmembrane transport and the ATP synthase. Cytochrome c oxidase is the component of the respiratory chain that catalyzes the reduction of oxygen to water. Electrons originating from reduced cytochrome c in the intermembrane space (IMS) are transferred via the dinuclear copper A center (CU(A)) of subunit 2 and heme A of subunit 1 to the active site in subunit 1, a binuclear center (BNC) formed by heme A3 and copper B (CU(B)). The BNC reduces molecular oxygen to 2 water molecules using 4 electrons from cytochrome c in the IMS and 4 protons from the mitochondrial matrix. The protein is Cytochrome c oxidase subunit 5B, mitochondrial (COX5B) of Sus scrofa (Pig).